A 777-amino-acid polypeptide reads, in one-letter code: MNSERSERITIPVLPLRDVVIYPHMVIPLFVGRQKSIKCIETSMSNDKKIMLIAQKEASKDEPTPKDLFDIGTISAILQMLKLPDGTVKVLIEGLQRAHIKNLTNNGEHFIAEVELISSSNLLDKNQEVLIRTTMNQFESYIKLNKKIPLEILNVLNNIKNSEKLADTIAAHMPLKLNDKQSVLEIRNINDRLEFLMAIMESEIDLLQVEKRIRHRVKKQMEKSQREYYLNEQIKAIQKELGDMDEIPDENKILKRKIKSSKMPKEAREKTELELQKLKMMSPMSAEATVVRSYIDWMIQVPWYLKTKIKKDLQQAKKILDIDHFGLETVKDRILEYLAVQSRKNKIKGPILCLIGPPGVGKTSLGKSIARSTGRKYVRIALGGIRDEAEIRGHRRTYIGSMPGKLIQKMAKAKVKNPLFLLDEIDKMSRDIRVDPASALLEVLDSEQNMNFNDHYLEVDYDLSDVMFVATSNSMNIPAPLLDRMEIIRLSGYTEDEKLNIAKRYLYPKQIERNGLEENEIKITDSAIISIIHYYTREAGVRSLEREISKICRKAVKNLILDKSLKHIEINSKNLKKFLGIKRFDYGKIHGTNQIGQVIGLAWTEVGGELLTIETTCVSGKGKLTYTGSLGEVMQESIQAALTVVRSQADRLGIKKDFHEKHDIHVHVPEGATPKDGPSAGAAMCTAIVSSLTNNPVKSNVAMTGEITLHGKILPIGGLKEKLLAAHRGGIKTVLIPYENKRNLEEIPKNIIEGLNIHPIKKIEEVLKLSLEKIPYV.

Residues 11 to 204 (IPVLPLRDVV…FLMAIMESEI (194 aa)) form the Lon N-terminal domain. Residue 356 to 363 (GPPGVGKT) coordinates ATP. In terms of domain architecture, Lon proteolytic spans 592–773 (TNQIGQVIGL…EEVLKLSLEK (182 aa)). Residues Ser679 and Lys722 contribute to the active site.

Belongs to the peptidase S16 family. In terms of assembly, homohexamer. Organized in a ring with a central cavity.

The protein localises to the cytoplasm. The enzyme catalyses Hydrolysis of proteins in presence of ATP.. Its function is as follows. ATP-dependent serine protease that mediates the selective degradation of mutant and abnormal proteins as well as certain short-lived regulatory proteins. Required for cellular homeostasis and for survival from DNA damage and developmental changes induced by stress. Degrades polypeptides processively to yield small peptide fragments that are 5 to 10 amino acids long. Binds to DNA in a double-stranded, site-specific manner. The sequence is that of Lon protease from Buchnera aphidicola subsp. Acyrthosiphon pisum (strain APS) (Acyrthosiphon pisum symbiotic bacterium).